The chain runs to 437 residues: Chromosomal replication initiator protein DnaA (437 aa).

Residues 1–72 are domain I, interacts with DnaA modulators; that stretch reads MEQFNAFKSL…ESLYEGIKSV (72 aa). The segment at 72–99 is domain II; sequence VNFVNEQDFFFNLAKLEENSRDTLYQNS. Positions 100-320 are domain III, AAA+ region; it reads GLSKNYTFQN…GIATKLLFFA (221 aa). ATP is bound by residues glycine 144, glycine 146, lysine 147, and threonine 148. Residues 321–437 are domain IV, binds dsDNA; the sequence is KTSKQNLINT…LRDVITSLVI (117 aa).

This sequence belongs to the DnaA family. Oligomerizes as a right-handed, spiral filament on DNA at oriC.

The protein localises to the cytoplasm. Plays an essential role in the initiation and regulation of chromosomal replication. ATP-DnaA binds to the origin of replication (oriC) to initiate formation of the DNA replication initiation complex once per cell cycle. Binds the DnaA box (a 9 base pair repeat at the origin) and separates the double-stranded (ds)DNA. Forms a right-handed helical filament on oriC DNA; dsDNA binds to the exterior of the filament while single-stranded (ss)DNA is stabiized in the filament's interior. The ATP-DnaA-oriC complex binds and stabilizes one strand of the AT-rich DNA unwinding element (DUE), permitting loading of DNA polymerase. After initiation quickly degrades to an ADP-DnaA complex that is not apt for DNA replication. Binds acidic phospholipids. The polypeptide is Chromosomal replication initiator protein DnaA (Mycoplasma genitalium (strain ATCC 33530 / DSM 19775 / NCTC 10195 / G37) (Mycoplasmoides genitalium)).